The primary structure comprises 309 residues: Glutaminase (309 aa).

Residues Ser-64, Asn-114, Glu-160, Asn-167, Tyr-191, Tyr-243, and Val-261 each coordinate substrate.

Belongs to the glutaminase family. As to quaternary structure, homotetramer.

It catalyses the reaction L-glutamine + H2O = L-glutamate + NH4(+). The polypeptide is Glutaminase (Methylobacterium sp. (strain 4-46)).